A 449-amino-acid chain; its full sequence is Phosphoglucosamine mutase (449 aa).

Ser103 serves as the catalytic Phosphoserine intermediate. Residues Ser103, Asp240, Asp242, and Asp244 each coordinate Mg(2+). The residue at position 103 (Ser103) is a Phosphoserine.

The protein belongs to the phosphohexose mutase family. Mg(2+) serves as cofactor. Post-translationally, activated by phosphorylation.

The enzyme catalyses alpha-D-glucosamine 1-phosphate = D-glucosamine 6-phosphate. Functionally, catalyzes the conversion of glucosamine-6-phosphate to glucosamine-1-phosphate. This Thermobifida fusca (strain YX) protein is Phosphoglucosamine mutase.